We begin with the raw amino-acid sequence, 134 residues long: uncharacterized protein (134 aa).

3 consecutive transmembrane segments (helical) span residues 21-41 (FSTT…LYLI), 52-72 (LVLL…TPYE), and 95-115 (IVMA…VYII).

Its subcellular location is the host membrane. This is an uncharacterized protein from Acidianus two-tailed virus (ATV).